The following is a 219-amino-acid chain: Apoptosis regulator OPG045 (219 aa).

Belongs to the orthopoxvirus OPG045 family. Homodimer. Interacts with host pro-apoptotic protein BCL2L11 (via BH3 domain). Interacts with host NLRP1. Interacts with host BAK.

Its subcellular location is the host mitochondrion outer membrane. The protein resides in the host cytoplasm. In terms of biological role, plays a role in evading host innate immune response by inhibiting host inflammasome activation. Interacts with and inhibits NLR-mediated interleukin-1 beta/IL1B production in infected cells. At the host mitochondria outer membrane, interacts with the BH3 domain of host BAK and prevents BAK from binding active BAX. In turn, host apoptosis is inhibited. The polypeptide is Apoptosis regulator OPG045 (OPG045) (Cynomys gunnisoni (Gunnison's prairie dog)).